The following is a 348-amino-acid chain: 3-isopropylmalate dehydrogenase (348 aa).

76-87 provides a ligand contact to NAD(+); that stretch reads GPKWTDPNNRPE. The substrate site is built by R94, R104, R132, and D217. The Mg(2+) site is built by D217, D241, and D245. 275-287 lines the NAD(+) pocket; the sequence is GSAPDIAGKNVAN.

It belongs to the isocitrate and isopropylmalate dehydrogenases family. LeuB type 1 subfamily. Homodimer. The cofactor is Mg(2+). Mn(2+) serves as cofactor.

The protein resides in the cytoplasm. It catalyses the reaction (2R,3S)-3-isopropylmalate + NAD(+) = 4-methyl-2-oxopentanoate + CO2 + NADH. It functions in the pathway amino-acid biosynthesis; L-leucine biosynthesis; L-leucine from 3-methyl-2-oxobutanoate: step 3/4. Functionally, catalyzes the oxidation of 3-carboxy-2-hydroxy-4-methylpentanoate (3-isopropylmalate) to 3-carboxy-4-methyl-2-oxopentanoate. The product decarboxylates to 4-methyl-2 oxopentanoate. The protein is 3-isopropylmalate dehydrogenase of Staphylococcus aureus (strain Mu50 / ATCC 700699).